The following is a 325-amino-acid chain: Elongation factor P--(R)-beta-lysine ligase (325 aa).

A substrate-binding site is contributed by 76–78 (SPE). ATP contacts are provided by residues 100 to 102 (RNE) and Asn109. Residue Tyr118 participates in substrate binding. 244–245 (EL) lines the ATP pocket. Glu251 is a substrate binding site. Gly300 lines the ATP pocket.

The protein belongs to the class-II aminoacyl-tRNA synthetase family. EpmA subfamily. Homodimer.

It catalyses the reaction D-beta-lysine + L-lysyl-[protein] + ATP = N(6)-((3R)-3,6-diaminohexanoyl)-L-lysyl-[protein] + AMP + diphosphate + H(+). With EpmB is involved in the beta-lysylation step of the post-translational modification of translation elongation factor P (EF-P). Catalyzes the ATP-dependent activation of (R)-beta-lysine produced by EpmB, forming a lysyl-adenylate, from which the beta-lysyl moiety is then transferred to the epsilon-amino group of a conserved specific lysine residue in EF-P. The polypeptide is Elongation factor P--(R)-beta-lysine ligase (Citrobacter koseri (strain ATCC BAA-895 / CDC 4225-83 / SGSC4696)).